The following is a 102-amino-acid chain: Protein translation factor SUI1 homolog (102 aa).

It belongs to the SUI1 family.

The protein is Protein translation factor SUI1 homolog of Cenarchaeum symbiosum (strain A).